A 902-amino-acid chain; its full sequence is Inter-alpha-trypsin inhibitor heavy chain H1 (902 aa).

Residues 1–28 (MDGTMGLQGLLCLCLASHLALQAMPTQG) form the signal peptide. Residues 29 to 158 (SPTDSTKGNK…KATFQLTYEE (130 aa)) form the VIT domain. A glycan (S-linked (Hex...) cysteine) is linked at Cys-52. A glycan (N-linked (GlcNAc...) asparagine) is linked at Asn-69. A Phosphoserine modification is found at Ser-121. The N-linked (GlcNAc...) asparagine glycan is linked to Asn-277. The VWFA domain maps to 282-442 (NKNVVFVIDI…WNFLEVRALE (161 aa)). 2 positions are modified to phosphothreonine: Thr-394 and Thr-399. Polar residues predominate over residues 637 to 651 (SASQPSPTHPSSSIQ). A disordered region spans residues 637 to 656 (SASQPSPTHPSSSIQKLPDR). The O-linked (GalNAc...) serine glycan is linked to Ser-639. Thr-644 is a glycosylation site (O-linked (GalNAc...) threonine). Asp-663 is modified (aspartate 1-(chondroitin 4-sulfate)-ester). Residues 664 to 902 (PHFIIRVPQK…HTDYIVPDIF (239 aa)) constitute a propeptide that is removed on maturation. Residue Asn-741 is glycosylated (N-linked (GlcNAc...) asparagine).

This sequence belongs to the ITIH family. As to quaternary structure, I-alpha-I plasma protease inhibitors are assembled from one or two heavy chains (HC) and one light chain, bikunin. Inter-alpha-inhibitor (I-alpha-I) is composed of ITIH1/HC1, ITIH2/HC2 and bikunin. Interacts with TNFAIP6 (via Link and CUB domains). In terms of processing, heavy chains are linked to bikunin via chondroitin 4-sulfate esterified to the alpha-carboxyl of the C-terminal aspartate after propeptide cleavage. Post-translationally, the S-linked glycan is composed of two 6-carbon sugars, possibly Glc or Gal.

It localises to the secreted. In terms of biological role, may act as a carrier of hyaluronan in serum or as a binding protein between hyaluronan and other matrix protein, including those on cell surfaces in tissues to regulate the localization, synthesis and degradation of hyaluronan which are essential to cells undergoing biological processes. The sequence is that of Inter-alpha-trypsin inhibitor heavy chain H1 (ITIH1) from Sus scrofa (Pig).